The primary structure comprises 161 residues: Nucleotide-binding protein Csal_2524 (161 aa).

Belongs to the YajQ family.

Nucleotide-binding protein. The sequence is that of Nucleotide-binding protein Csal_2524 from Chromohalobacter salexigens (strain ATCC BAA-138 / DSM 3043 / CIP 106854 / NCIMB 13768 / 1H11).